Reading from the N-terminus, the 435-residue chain is Mitochondrial association factor 1 form a1 (435 aa).

The N-terminal stretch at 1–20 is a signal peptide; that stretch reads MWRIWRCRLSFLFATGCLLG. Residues 21–96 are Vacuolar-facing; it reads ALTAGLGSQM…VTARRRRNRR (76 aa). Residues 97–117 form a helical membrane-spanning segment; that stretch reads IALIATAVGVAVILAALYVLR. Over 118–435 the chain is Cytoplasmic; the sequence is RRRAQPPQEP…ERTYTFPQGD (318 aa). The interval 120 to 159 is disordered; it reads RAQPPQEPEPPTRLRTPRPRAPSGQQQPSESEPPAGVPMT.

Interacts with host SAMM50.

Its subcellular location is the parasitophorous vacuole membrane. During host cell infection by tachyzoites, does not play a role in tethering the parasitophorous vacuole to the host mitochondria, probably because it does not bind host mitochondrial import protein TOMM70. This chain is Mitochondrial association factor 1 form a1, found in Toxoplasma gondii (strain ATCC 50611 / Me49).